The primary structure comprises 129 residues: Ig lambda-1 chain V regions MOPC 104E/RPC20/J558/S104 (129 aa).

The first 19 residues, 1-19, serve as a signal peptide directing secretion; the sequence is MAWISLILSLLALSSGAIS. At Gln-20 the chain carries Pyrrolidone carboxylic acid. The Ig-like domain maps to 20-125; sequence QAVVTQESAL…HWVFGGGTKL (106 aa).

The protein is Ig lambda-1 chain V regions MOPC 104E/RPC20/J558/S104 of Mus musculus (Mouse).